The primary structure comprises 363 residues: Chorismate synthase (363 aa).

2 residues coordinate NADP(+): R48 and R54. FMN contacts are provided by residues 131-133 (RSS), 244-245 (NA), G288, 303-307 (KPTSS), and R329.

It belongs to the chorismate synthase family. In terms of assembly, homotetramer. The cofactor is FMNH2.

The enzyme catalyses 5-O-(1-carboxyvinyl)-3-phosphoshikimate = chorismate + phosphate. It participates in metabolic intermediate biosynthesis; chorismate biosynthesis; chorismate from D-erythrose 4-phosphate and phosphoenolpyruvate: step 7/7. In terms of biological role, catalyzes the anti-1,4-elimination of the C-3 phosphate and the C-6 proR hydrogen from 5-enolpyruvylshikimate-3-phosphate (EPSP) to yield chorismate, which is the branch point compound that serves as the starting substrate for the three terminal pathways of aromatic amino acid biosynthesis. This reaction introduces a second double bond into the aromatic ring system. This chain is Chorismate synthase, found in Hyphomonas neptunium (strain ATCC 15444).